Reading from the N-terminus, the 415-residue chain is Glutamyl-tRNA reductase (415 aa).

Substrate contacts are provided by residues 49 to 52 (TCNR), serine 106, 111 to 113 (EPQ), and glutamine 117. The active-site Nucleophile is the cysteine 50. 186 to 191 (GAGETI) lines the NADP(+) pocket.

It belongs to the glutamyl-tRNA reductase family. In terms of assembly, homodimer.

It carries out the reaction (S)-4-amino-5-oxopentanoate + tRNA(Glu) + NADP(+) = L-glutamyl-tRNA(Glu) + NADPH + H(+). It participates in porphyrin-containing compound metabolism; protoporphyrin-IX biosynthesis; 5-aminolevulinate from L-glutamyl-tRNA(Glu): step 1/2. Functionally, catalyzes the NADPH-dependent reduction of glutamyl-tRNA(Glu) to glutamate 1-semialdehyde (GSA). The sequence is that of Glutamyl-tRNA reductase from Teredinibacter turnerae (strain ATCC 39867 / T7901).